The sequence spans 1261 residues: Myosin-1 (1261 aa).

The tract at residues 1–39 (MGHSRRPVGGEKKSRGFGRSKVADVGDGRQAGKPQVKKA) is disordered. Residues 49-728 (IGVSDLTLLS…TLFALEAMRD (680 aa)) enclose the Myosin motor domain. 142–149 (GESGAGKT) contacts ATP. Residue Ser-370 is modified to Phosphoserine. An actin-binding region spans residues 417–499 (SIGILDIYGF…PGVFAALNDA (83 aa)). 2 IQ domains span residues 732-752 (HNMA…RIEC) and 753-778 (AIRI…QGHQ). A TH1 domain is found at 786–973 (RRRMSLLGSR…KSHTIHTSPG (188 aa)). Disordered regions lie at residues 956 to 1093 (ASPN…KALY) and 1139 to 1261 (YLEE…DDEW). 4 stretches are compositionally biased toward pro residues: residues 1019 to 1029 (RPTPKPQPLPQ), 1038 to 1052 (IPAP…PVPQ), 1072 to 1084 (APPP…PPAP), and 1147 to 1159 (TPKP…PPAA). The SH3 domain maps to 1084–1145 (PKKATAKALY…PQAYLEEQVA (62 aa)). A compositionally biased stretch (low complexity) spans 1160–1181 (PRASPVPSANGAAATAAAAKAK). The span at 1212–1233 (VSMNSQDSSGGSGRGTPNSTSN) shows a compositional bias: polar residues. Residues 1234-1243 (ASLAGGLAEA) show a composition bias toward low complexity.

This sequence belongs to the TRAFAC class myosin-kinesin ATPase superfamily. Myosin family. Post-translationally, phosphorylation of the TEDS site (Ser-370) is required for the polarization of the actin cytoskeleton. Phosphorylation probably activates the myosin-I ATPase activity.

The protein resides in the cytoplasm. It localises to the cytoskeleton. Its subcellular location is the actin patch. Its function is as follows. Type-I myosin implicated in the organization of the actin cytoskeleton. Required for proper actin cytoskeleton polarization. At the cell cortex, assembles in patch-like structures together with proteins from the actin-polymerizing machinery and promotes actin assembly. Functions as actin nucleation-promoting factor (NPF) for the Arp2/3 complex. Plays an important role in polarized growth, spore germination, hyphal morphogenesis, and septal wall formation. The sequence is that of Myosin-1 (myoA) from Aspergillus oryzae (strain ATCC 42149 / RIB 40) (Yellow koji mold).